A 130-amino-acid polypeptide reads, in one-letter code: Small ribosomal subunit protein uS11 (130 aa).

It belongs to the universal ribosomal protein uS11 family. In terms of assembly, part of the 30S ribosomal subunit. Interacts with proteins S7 and S18. Binds to IF-3.

Functionally, located on the platform of the 30S subunit, it bridges several disparate RNA helices of the 16S rRNA. Forms part of the Shine-Dalgarno cleft in the 70S ribosome. The polypeptide is Small ribosomal subunit protein uS11 (Moorella thermoacetica (strain ATCC 39073 / JCM 9320)).